Consider the following 323-residue polypeptide: Olfactory receptor 6T1 (323 aa).

At 1–25 (MNPENWTQVTSFVLLGFPSSHLIQF) the chain is on the extracellular side. Asn-5 carries an N-linked (GlcNAc...) asparagine glycan. Residues 26 to 46 (LVFLGLMVTYIVTATGKLLII) form a helical membrane-spanning segment. The Cytoplasmic portion of the chain corresponds to 47–54 (VLSWIDQR). Residues 55-75 (LHIQMYFFLRNFSFLELLLVT) form a helical membrane-spanning segment. Over 76 to 99 (VVVPKMLVVILTGDHTISFVSCII) the chain is Extracellular. Cys-97 and Cys-189 form a disulfide bridge. A helical transmembrane segment spans residues 100–120 (QSYLYFFLGTTDFFLLAVMSL). Residues 121–139 (DRYLAICRPLRYETLMNGH) are Cytoplasmic-facing. A helical transmembrane segment spans residues 140–160 (VCSQLVLASWLAGFLWVLCPT). The Extracellular segment spans residues 161-197 (VLMASLPFCGPNGIDHFFRDSWPLLRLSCGDTHLLKL). The helical transmembrane segment at 198-217 (VAFMLSTLVLLGSLALTSVS) threads the bilayer. At 218–237 (YACILATVLRAPTAAERRKA) the chain is on the cytoplasmic side. The chain crosses the membrane as a helical span at residues 238-258 (FSTCASHLTVVVIIYGSSIFL). Over 259 to 271 (YIRMSEAQSKLLN) the chain is Extracellular. A helical membrane pass occupies residues 272–292 (KGASVLSCIITPLLNPFIFTL). Over 293–323 (RNDKVQQALREALGWPRLTAVMKLRVTSQRK) the chain is Cytoplasmic.

Belongs to the G-protein coupled receptor 1 family.

The protein resides in the cell membrane. Odorant receptor. The polypeptide is Olfactory receptor 6T1 (OR6T1) (Homo sapiens (Human)).